Consider the following 444-residue polypeptide: Acetyl-CoA--deacetylcephalosporin C acetyltransferase (444 aa).

A propeptide spanning residues 1 to 71 (MLPSAQVARL…PQIANRFEAS (71 aa)) is cleaved from the precursor. An AB hydrolase-1 domain is found at 112 to 425 (VIVCHTLTSS…DTNEGHDFFV (314 aa)). Active-site residues include S208 and H421.

It belongs to the AB hydrolase superfamily. MetX family. Heterodimer of chain I and chain II.

It carries out the reaction deacetylcephalosporin C + acetyl-CoA = cephalosporin C + CoA. The protein operates within antibiotic biosynthesis; cephalosporin C biosynthesis. In terms of biological role, catalyzes the conversion of deacetylcephalosporin C to cephalosporin C. The protein is Acetyl-CoA--deacetylcephalosporin C acetyltransferase (CEFG) of Hapsidospora chrysogena (Acremonium chrysogenum).